The following is a 389-amino-acid chain: Succinate--CoA ligase [ADP-forming] subunit beta (389 aa).

The region spanning 9–236 is the ATP-grasp domain; it reads RDMFEAHGVP…KDAADPLEAK (228 aa). ATP-binding positions include Lys-45, 52–54, Ala-94, and Glu-99; that span reads GRG. Positions 191 and 205 each coordinate Mg(2+). Substrate-binding positions include Asn-256 and 318–320; that span reads GIT.

Belongs to the succinate/malate CoA ligase beta subunit family. As to quaternary structure, heterotetramer of two alpha and two beta subunits. It depends on Mg(2+) as a cofactor.

It carries out the reaction succinate + ATP + CoA = succinyl-CoA + ADP + phosphate. The enzyme catalyses GTP + succinate + CoA = succinyl-CoA + GDP + phosphate. Its pathway is carbohydrate metabolism; tricarboxylic acid cycle; succinate from succinyl-CoA (ligase route): step 1/1. In terms of biological role, succinyl-CoA synthetase functions in the citric acid cycle (TCA), coupling the hydrolysis of succinyl-CoA to the synthesis of either ATP or GTP and thus represents the only step of substrate-level phosphorylation in the TCA. The beta subunit provides nucleotide specificity of the enzyme and binds the substrate succinate, while the binding sites for coenzyme A and phosphate are found in the alpha subunit. The protein is Succinate--CoA ligase [ADP-forming] subunit beta of Arthrobacter sp. (strain FB24).